The primary structure comprises 255 residues: Small ribosomal subunit protein uS2 (255 aa).

Residues 233-255 (DFVAEEAASEESLEELAEIVEGK) are disordered.

The protein belongs to the universal ribosomal protein uS2 family.

The protein is Small ribosomal subunit protein uS2 of Lactococcus lactis subsp. cremoris (strain SK11).